A 590-amino-acid polypeptide reads, in one-letter code: Cytidine monophosphate-N-acetylneuraminic acid hydroxylase (590 aa).

A Rieske domain is found at 14 to 112; that stretch reads LSPVEVASLK…VEMDENNRLL (99 aa). [2Fe-2S] cluster is bound by residues Cys-54, His-56, Cys-75, and His-78.

It belongs to the CMP-Neu5Ac hydroxylase family. [2Fe-2S] cluster is required as a cofactor.

It localises to the cytoplasm. The enzyme catalyses CMP-N-acetyl-beta-neuraminate + 2 Fe(II)-[cytochrome b5] + O2 + 2 H(+) = CMP-N-glycoloyl-beta-neuraminate + 2 Fe(III)-[cytochrome b5] + H2O. The protein operates within amino-sugar metabolism; N-acetylneuraminate metabolism. Functionally, sialic acids are components of carbohydrate chains of glycoconjugates and are involved in cell-cell recognition and cell-pathogen interactions. Catalyzes the conversion of CMP-N-acetylneuraminic acid (CMP-Neu5Ac) into its hydroxylated derivative CMP-N-glycolylneuraminic acid (CMP-Neu5Gc), a sialic acid abundantly expressed at the surface of many cells. The chain is Cytidine monophosphate-N-acetylneuraminic acid hydroxylase from Pan troglodytes (Chimpanzee).